The primary structure comprises 750 residues: Photosystem I P700 chlorophyll a apoprotein A1 (750 aa).

8 helical membrane passes run 70 to 93, 156 to 179, 195 to 219, 291 to 309, 346 to 369, 385 to 411, 433 to 455, and 531 to 549; these read VFSA…FHGA, LYCT…FHYH, LNHH…HVSL, IAHH…GHMY, WHAQ…HHMY, LSLF…IFMV, AIIS…LYIH, and FLVH…LILL. Residues C573 and C582 each contribute to the [4Fe-4S] cluster site. 2 helical membrane passes run 589 to 610 and 664 to 686; these read HVFL…HFSW and LSAY…MFLF. H675 is a binding site for chlorophyll a'. Chlorophyll a contacts are provided by M683 and Y691. W692 provides a ligand contact to phylloquinone. A helical transmembrane segment spans residues 724 to 744; sequence AVGVTHYLLGGIATTWAFFLA.

It belongs to the PsaA/PsaB family. As to quaternary structure, the PsaA/B heterodimer binds the P700 chlorophyll special pair and subsequent electron acceptors. PSI consists of a core antenna complex that captures photons, and an electron transfer chain that converts photonic excitation into a charge separation. The eukaryotic PSI reaction center is composed of at least 11 subunits. The cofactor is P700 is a chlorophyll a/chlorophyll a' dimer, A0 is one or more chlorophyll a, A1 is one or both phylloquinones and FX is a shared 4Fe-4S iron-sulfur center..

It is found in the plastid. It localises to the chloroplast thylakoid membrane. It carries out the reaction reduced [plastocyanin] + hnu + oxidized [2Fe-2S]-[ferredoxin] = oxidized [plastocyanin] + reduced [2Fe-2S]-[ferredoxin]. PsaA and PsaB bind P700, the primary electron donor of photosystem I (PSI), as well as the electron acceptors A0, A1 and FX. PSI is a plastocyanin-ferredoxin oxidoreductase, converting photonic excitation into a charge separation, which transfers an electron from the donor P700 chlorophyll pair to the spectroscopically characterized acceptors A0, A1, FX, FA and FB in turn. Oxidized P700 is reduced on the lumenal side of the thylakoid membrane by plastocyanin. The sequence is that of Photosystem I P700 chlorophyll a apoprotein A1 from Lepidium virginicum (Virginia pepperweed).